The primary structure comprises 180 residues: Stathmin-3 (180 aa).

In terms of domain architecture, SLD spans 38–180 (GDMEVKQLDK…NKEQREEISG (143 aa)). Residues 60-74 (SPSDLSPESPILSSP) are compositionally biased toward low complexity. Residues 60–82 (SPSDLSPESPILSSPPKKKDLSL) are disordered. Residues 75-179 (PKKKDLSLEE…RNKEQREEIS (105 aa)) adopt a coiled-coil conformation.

This sequence belongs to the stathmin family.

In Gallus gallus (Chicken), this protein is Stathmin-3 (STMN3).